The sequence spans 126 residues: Protein chibby homolog 1 (126 aa).

The span at 1-10 shows a compositional bias: polar residues; sequence MPFFGNTFSP. A disordered region spans residues 1–26; it reads MPFFGNTFSPKKTPPRKSASLSNLHS. Residues Ser9 and Ser20 each carry the phosphoserine modification. The segment at 60-112 is minimal region for the interaction with PKD2; the sequence is IAETGVSGGVDRREVQRLRRRNQQLEEENNLLRLKVDILLDMLSESTAESHLM. The stretch at 67-125 forms a coiled coil; that stretch reads GGVDRREVQRLRRRNQQLEEENNLLRLKVDILLDMLSESTAESHLMEKELDELRISRKR. Residues 77–98 are leucine-zipper; mediates homodimerization; that stretch reads LRRRNQQLEEENNLLRLKVDIL.

It belongs to the chibby family. In terms of assembly, homodimer. Homodimerization is essential for nuclear localization and interaction with KPNA4 but is dispensable for interaction with CTNNB1. Interacts with polycystin-2/PKD2 and GM130. Interacts with the C-terminal region of CTNNB1. Interacts (C-terminus) with TCIM (C-terminus), TCIM competes with CTNNB1 for the interaction with CBY1. Interacts with FAM92A; this interaction facilitates targeting of FAM92A to cilium basal body. Interacts with CIBAR2. Interacts with KPNA4. As to expression, widely expressed. Expressed at higher levels in heart, skeletal muscle, kidney and placenta. Also found in brain, lung, liver and testis. Significantly down-regulated in thyroid and metastatic uterine tumors.

It localises to the nucleus speckle. The protein localises to the cytoplasm. It is found in the cytoskeleton. Its subcellular location is the cilium basal body. The protein resides in the microtubule organizing center. It localises to the centrosome. The protein localises to the centriole. It is found in the golgi apparatus. Its subcellular location is the trans-Golgi network. The protein resides in the cell projection. It localises to the cilium. The protein localises to the flagellum. It is found in the nucleus. Its function is as follows. Inhibits the Wnt/Wingless pathway by binding to CTNNB1/beta-catenin and inhibiting beta-catenin-mediated transcriptional activation through competition with TCF/LEF transcription factors. Has also been shown to play a role in regulating the intracellular trafficking of polycystin-2/PKD2 and possibly of other intracellular proteins. Promotes adipocyte and cardiomyocyte differentiation. The chain is Protein chibby homolog 1 (CBY1) from Homo sapiens (Human).